The following is a 147-amino-acid chain: Deoxyuridine 5'-triphosphate nucleotidohydrolase (147 aa).

Residues 67 to 69 (RSG), N80, and 84 to 86 (TID) contribute to the substrate site.

Belongs to the dUTPase family. The cofactor is Mg(2+).

The catalysed reaction is dUTP + H2O = dUMP + diphosphate + H(+). The protein operates within pyrimidine metabolism; dUMP biosynthesis; dUMP from dCTP (dUTP route): step 2/2. In terms of biological role, this enzyme is involved in nucleotide metabolism: it produces dUMP, the immediate precursor of thymidine nucleotides and it decreases the intracellular concentration of dUTP so that uracil cannot be incorporated into DNA. The sequence is that of Deoxyuridine 5'-triphosphate nucleotidohydrolase from Anaeromyxobacter sp. (strain Fw109-5).